The following is a 780-amino-acid chain: uncharacterized protein (780 aa).

The BTB domain occupies 10-80; sequence NNNIIKLNIG…MRTGTFTLPY (71 aa).

This is an uncharacterized protein from Dictyostelium discoideum (Social amoeba).